We begin with the raw amino-acid sequence, 285 residues long: Probable endonuclease 4 (285 aa).

Residues His-69, His-109, Glu-145, Asp-179, His-182, His-216, Asp-229, His-231, and Glu-261 each coordinate Zn(2+).

The protein belongs to the AP endonuclease 2 family. It depends on Zn(2+) as a cofactor.

It carries out the reaction Endonucleolytic cleavage to 5'-phosphooligonucleotide end-products.. In terms of biological role, endonuclease IV plays a role in DNA repair. It cleaves phosphodiester bonds at apurinic or apyrimidinic (AP) sites, generating a 3'-hydroxyl group and a 5'-terminal sugar phosphate. The chain is Probable endonuclease 4 from Salmonella typhi.